We begin with the raw amino-acid sequence, 64 residues long: Large ribosomal subunit protein bL35 (64 aa).

2 disordered regions span residues Met1–Gly20 and Pro37–Gly64.

Belongs to the bacterial ribosomal protein bL35 family.

This is Large ribosomal subunit protein bL35 from Mycobacterium sp. (strain JLS).